The sequence spans 237 residues: 2-C-methyl-D-erythritol 4-phosphate cytidylyltransferase (237 aa).

This sequence belongs to the IspD/TarI cytidylyltransferase family. IspD subfamily.

The catalysed reaction is 2-C-methyl-D-erythritol 4-phosphate + CTP + H(+) = 4-CDP-2-C-methyl-D-erythritol + diphosphate. The protein operates within isoprenoid biosynthesis; isopentenyl diphosphate biosynthesis via DXP pathway; isopentenyl diphosphate from 1-deoxy-D-xylulose 5-phosphate: step 2/6. Functionally, catalyzes the formation of 4-diphosphocytidyl-2-C-methyl-D-erythritol from CTP and 2-C-methyl-D-erythritol 4-phosphate (MEP). The protein is 2-C-methyl-D-erythritol 4-phosphate cytidylyltransferase of Vibrio vulnificus (strain CMCP6).